The chain runs to 504 residues: MSLIEDILQTSSTVTLLGTVLFLLVLYLRSSGSSSEEQGKEPPGPRPLPLLGNMLQLDLKKPYCTLCELSKKYGSIFTVHFGPKKVVVLAGYKTVKQALVNQAEDFGDRDITPVFYDFNQGHGILFANGDSWKEMRRFALTNLRDFGMGKKGSEEKILEEIPYLIEVFEKHEGKAFDTTQSVLYAVSNIISAIVYGSRFEYTDPLFTGMADRAKESIHLTGSASIQMYNMFPWLGPWINNLTRLKKNIADMKMEVIELVRGLKETLNPHMCRGFVDSFLVRKQTLEESGHMDSFYHDDNLVFSVGNLFSAGTDTTGTTLRWGLLLMTKYPHIQDQVQEEISRVIGSRQTLVEDRKNLPYTDAVIHETQRLANIVPMSVPHTTSRDVTFQGYFIKKGTSVIPLLTSVLQDDSEWESPNTFNPSHFLDEQGGFVKRDAFMAFSAGRRVCLGEGLARMELFLFFTSLLQRFRFSPPPGVTEDDLDLTPLLGFTLNPSPHQLCAVSRV.

Position 447 (cysteine 447) interacts with heme.

Belongs to the cytochrome P450 family. Requires heme as cofactor.

It is found in the endoplasmic reticulum membrane. Its subcellular location is the microsome membrane. It carries out the reaction an organic molecule + reduced [NADPH--hemoprotein reductase] + O2 = an alcohol + oxidized [NADPH--hemoprotein reductase] + H2O + H(+). This is Cytochrome P450 2K1 (cyp2k1) from Oncorhynchus mykiss (Rainbow trout).